The primary structure comprises 146 residues: MORN repeat-containing protein 4 (146 aa).

4 MORN repeats span residues 16-38, 39-61, 62-84, and 85-107; these read YRGE…DGGT, YLGH…DGSR, YEGE…DNMT, and FEGE…DGSH.

As to quaternary structure, interacts with MYO3A.

It is found in the cytoplasm. The protein resides in the cell projection. Its subcellular location is the filopodium tip. The protein localises to the stereocilium. In terms of biological role, plays a role in promoting axonal degeneration following neuronal injury by toxic insult or trauma. The polypeptide is MORN repeat-containing protein 4 (Morn4) (Mus musculus (Mouse)).